The following is a 174-amino-acid chain: Myelin basic protein (174 aa).

Positions 1–86 (MASQKRSSFR…GRPGDDNPVV (86 aa)) are disordered. At Ala2 the chain carries N-acetylalanine; in forms C1, C2 and C3. At Gln4 the chain carries Deamidated glutamine; in forms C1 and C2; partial. Residue Ser8 is modified to Phosphoserine; in forms C2 and C3. Ser19 is subject to Phosphoserine; in form C2. Residues 22–35 (DHARHGSPRHRDSG) are compositionally biased toward basic and acidic residues. Arg25 carries the post-translational modification Citrulline; in forms C1, C2 and C3. At Ser34 the chain carries Phosphoserine; in forms C2 and C3. A Citrulline; in form C3 modification is found at Arg42. Residues 45–61 (GGDRHVPRRGFGKDIHA) show a composition bias toward basic and acidic residues. Ser65 carries the phosphoserine; in forms C2 and C3 modification. Gln72 is subject to Deamidated glutamine; in forms C1, C2 and C3; partial. Ser74 is modified (phosphoserine; in form C2). Asn91 carries the deamidated asparagine; in forms C1, C2 and C3; partial modification. Thr97 carries the phosphothreonine; in forms C2 and C3 modification. Gln102 is subject to Deamidated glutamine; in forms C1, C2 and C3; partial. Gln102 is modified (deamidated glutamine; in form C1). Arg106 carries the omega-N-methylarginine; in forms C1, C2 and C3; alternate modification. A Symmetric dimethylarginine; in forms C1, C2 and C3; alternate modification is found at Arg106. Phosphoserine; in forms C2 and C3 is present on residues Ser114 and Ser142. The segment at 126–174 (SGKFYEHKSAHKGHKGSYHEGQGTLSKIFKLGGSGSRPGSRSGSPVARR) is disordered. Gln147 is modified (deamidated glutamine; in forms C1, C2 and C3; partial). Over residues 162-174 (RPGSRSGSPVARR) the composition is skewed to low complexity. Ser165 bears the Phosphoserine; in forms C2 and C3 mark. Arg166 bears the Citrulline; in forms C2 and C3 mark. Ser169 bears the Phosphoserine; in forms C2 and C3 mark.

It belongs to the myelin basic protein family. Homodimer. Post-translationally, several charge isomers are produced as a result of optional post-translational modifications, such as phosphorylation of serine or threonine residues, deamidation of glutamine or asparagine residues, citrullination and methylation of arginine residues. Chicken MBP contains 4 charge components denoted as C1, C2, C3 and C8. C1 lacks any phosphorylation sites, whereas C2 and C3 contain respectively 10 and 8 phosphorylation sites and arginine residues modified to citrulline. All three charge components contain deamidated glutamines and asparagine, and a methylated arginine.

The protein localises to the myelin membrane. Functionally, is, with PLP, the most abundant protein component of the myelin membrane in the CNS. Has a role in both the formation and stabilization of this compact multilayer arrangement of bilayers. Each splice variant and charge isomer may have a specialized function in the assembly of an optimized, biochemically functional myelin membrane. This is Myelin basic protein (MBP) from Gallus gallus (Chicken).